We begin with the raw amino-acid sequence, 481 residues long: MACRKFCRVYGGQGRRKEEAVPPETKPSRVFPHGPFYTPAEDACLDSPPPETPKPSHTTPPSEAERLCHLQEILAQMYGNQDYPIEDDPSADAADDVDEDAPDDVAYPEEYAEELFLPGDATGPLIGANDHIPPPCGASPPGIRRRSRDEIGATGFTAEELDAMDREAARAISRGGKPPSTMAKLVTGMGFTIHGALTPGSEGCVFDSSHPDYPQRVIVKAGWYTSTSHEARLLRRLDHPAILPLLDLHVVSGVTCLVLPKYQADLYTYLSRRLNPLGRPQIAAVSRQLLSAVDYIHRQGIIHRDIKTENIFINTPEDICLGDFGAACFVQGSRSSPFPYGIAGTIDTNAPEVLAGDPYTTTVDIWSAGLVIFETAVHNASLFSAPRGPKRGPCDSQITRIIRQAQVHVDEFSPHPESRLTSRYRSRAAGNNRPPYTRPAWTRYYKMDIDVEYLVCKALTFDGALRPSAAELLCLPLFQQK.

Residues 12–63 (GQGRRKEEAVPPETKPSRVFPHGPFYTPAEDACLDSPPPETPKPSHTTPPSE) form a disordered region. Residues 191–478 (FTIHGALTPG…AAELLCLPLF (288 aa)) enclose the Protein kinase domain. ATP contacts are provided by residues 197-205 (LTPGSEGCV) and Lys-220. Asp-305 acts as the Proton acceptor in catalysis.

It belongs to the protein kinase superfamily. Ser/Thr protein kinase family. In terms of assembly, interacts with host LAT; this interaction prevents LAT activation of TRAF6. Post-translationally, phosphorylated by UL13; this phosphorylation regulates subsequent phosphorylation of UL31 and UL34 by US3. Autophosphorylated.

Its subcellular location is the host cytoplasm. It localises to the host nucleus. The catalysed reaction is L-seryl-[protein] + ATP = O-phospho-L-seryl-[protein] + ADP + H(+). It catalyses the reaction L-threonyl-[protein] + ATP = O-phospho-L-threonyl-[protein] + ADP + H(+). Multifunctional serine/threonine kinase that plays a role in several processes including egress of virus particles from the nucleus, modulation of the actin cytoskeleton and inhibition of host immune response. Phosphorylates UL31 and UL34, two critical regulators of capsid budding from nucleus to endoplasmic reticulum, thereby facilitating virion egress. Modulates and redistributes host components of the nuclear envelope, including LMNA, emerin/EMD and the nuclear matrix protein MATR3. In turn, facilitates nuclear pore impairment and capsid release through impaired nuclear envelope. Phosphorylates envelope glycoprotein B (gB), probably to direct it to the cell surface. Promotes virus intracellular spread by restructuring host cell cytoskeleton. Blocks host apoptosis to extend cell survival and allow efficient viral replication. Promotes viral gene expression by phosphorylating host HDAC2 to reduce viral genome silencing. Strongly inhibits TCR-activated signal transduction in T-cells by reducing the ubiquitination of LAT and TRAF6, leading to a suboptimal activation of LAT. Subverts host antiviral innate immunity by inhibiting type I interferon production through hyperphosphorylation of beta-catenin/CTNNB1. In addition, phosphorylates the RNA sensor RIGI and the transcription factor IRF3 to prevent the RLR-mediated antiviral signaling pathway. Hyperphosphorylates host RELA and thereby dampens NF-kappa-B signaling. Acts as an immunoevasin partly responsible for inhibition of MR1 expression and antigen presentation in response to bacterial infection. The chain is Serine/threonine-protein kinase US3 (US3) from Human herpesvirus 1 (strain 17) (HHV-1).